Consider the following 57-residue polypeptide: UPF0391 membrane protein Atu4467 (57 aa).

2 helical membrane passes run 4 to 24 (WALI…TGIS) and 33 to 53 (ILFF…LMAG).

Belongs to the UPF0391 family.

The protein localises to the cell membrane. The sequence is that of UPF0391 membrane protein Atu4467 from Agrobacterium fabrum (strain C58 / ATCC 33970) (Agrobacterium tumefaciens (strain C58)).